We begin with the raw amino-acid sequence, 344 residues long: tRNA N6-adenosine threonylcarbamoyltransferase (344 aa).

Fe cation contacts are provided by histidine 112 and histidine 116. Residues 135-139 (LVSGG), aspartate 168, glycine 181, and asparagine 271 each bind substrate. Aspartate 299 contributes to the Fe cation binding site.

Belongs to the KAE1 / TsaD family. Requires Fe(2+) as cofactor.

The protein resides in the cytoplasm. It catalyses the reaction L-threonylcarbamoyladenylate + adenosine(37) in tRNA = N(6)-L-threonylcarbamoyladenosine(37) in tRNA + AMP + H(+). In terms of biological role, required for the formation of a threonylcarbamoyl group on adenosine at position 37 (t(6)A37) in tRNAs that read codons beginning with adenine. Is involved in the transfer of the threonylcarbamoyl moiety of threonylcarbamoyl-AMP (TC-AMP) to the N6 group of A37, together with TsaE and TsaB. TsaD likely plays a direct catalytic role in this reaction. The sequence is that of tRNA N6-adenosine threonylcarbamoyltransferase from Sphingopyxis alaskensis (strain DSM 13593 / LMG 18877 / RB2256) (Sphingomonas alaskensis).